The following is a 250-amino-acid chain: Hydroxyethylthiazole kinase (250 aa).

Residue M39 participates in substrate binding. ATP-binding residues include R114 and T159. Position 186 (G186) interacts with substrate.

This sequence belongs to the Thz kinase family. Mg(2+) is required as a cofactor.

It catalyses the reaction 5-(2-hydroxyethyl)-4-methylthiazole + ATP = 4-methyl-5-(2-phosphooxyethyl)-thiazole + ADP + H(+). It participates in cofactor biosynthesis; thiamine diphosphate biosynthesis; 4-methyl-5-(2-phosphoethyl)-thiazole from 5-(2-hydroxyethyl)-4-methylthiazole: step 1/1. Catalyzes the phosphorylation of the hydroxyl group of 4-methyl-5-beta-hydroxyethylthiazole (THZ). The sequence is that of Hydroxyethylthiazole kinase from Lactococcus lactis subsp. cremoris (strain MG1363).